The following is a 490-amino-acid chain: Cytochrome P450 2C50 (490 aa).

Phosphoserine is present on serine 127. N6-acetyllysine occurs at positions 249 and 375. Cysteine 435 contributes to the heme binding site.

This sequence belongs to the cytochrome P450 family. Requires heme as cofactor. In terms of tissue distribution, expressed in heart and liver.

Its subcellular location is the endoplasmic reticulum membrane. It is found in the microsome membrane. It catalyses the reaction an organic molecule + reduced [NADPH--hemoprotein reductase] + O2 = an alcohol + oxidized [NADPH--hemoprotein reductase] + H2O + H(+). Its function is as follows. Metabolizes arachidonic acid to several midchain and omega-terminal hydroxyeicosatetraenoic acids (HETE). This is Cytochrome P450 2C50 from Mus musculus (Mouse).